Here is a 24-residue protein sequence, read N- to C-terminus: Superoxide dismutase [Cu-Zn], chloroplastic (24 aa).

It belongs to the Cu-Zn superoxide dismutase family. Homodimer. Cu cation serves as cofactor. Requires Zn(2+) as cofactor.

It localises to the plastid. The protein resides in the chloroplast. It catalyses the reaction 2 superoxide + 2 H(+) = H2O2 + O2. Destroys radicals which are normally produced within the cells and which are toxic to biological systems. This chain is Superoxide dismutase [Cu-Zn], chloroplastic, found in Picea abies (Norway spruce).